The following is a 175-amino-acid chain: Inorganic pyrophosphatase (175 aa).

The substrate site is built by lysine 30, arginine 44, and tyrosine 56. Mg(2+)-binding residues include aspartate 66, aspartate 71, and aspartate 103. A substrate-binding site is contributed by tyrosine 142.

Belongs to the PPase family. Homohexamer. The cofactor is Mg(2+).

The protein localises to the cytoplasm. The catalysed reaction is diphosphate + H2O = 2 phosphate + H(+). Functionally, catalyzes the hydrolysis of inorganic pyrophosphate (PPi) forming two phosphate ions. This Pseudomonas aeruginosa (strain ATCC 15692 / DSM 22644 / CIP 104116 / JCM 14847 / LMG 12228 / 1C / PRS 101 / PAO1) protein is Inorganic pyrophosphatase.